The chain runs to 178 residues: Caveolin-1 (178 aa).

N-acetylserine is present on Ser-2. A Phosphoserine modification is found at Ser-2. Positions 2 to 94 (SGGKYVDAEG…WKASFTTFTV (93 aa)) are required for homooligomerization. At 2 to 104 (SGGKYVDAEG…TKYWFYRLLS (103 aa)) the chain is on the cytoplasmic side. N6-acetyllysine; alternate is present on Lys-5. Residue Lys-5 forms a Glycyl lysine isopeptide (Lys-Gly) (interchain with G-Cter in ubiquitin); alternate linkage. Tyr-6 is modified (phosphotyrosine). Tyr-14 bears the Phosphotyrosine; by ABL1 mark. Tyr-25 is modified (phosphotyrosine). Glycyl lysine isopeptide (Lys-Gly) (interchain with G-Cter in ubiquitin) cross-links involve residues Lys-26, Lys-30, Lys-39, Lys-47, and Lys-57. The interaction with CAVIN3 stretch occupies residues 82-94 (DGIWKASFTTFTV). The segment at residues 105-125 (ALLGIPLALLWGIYFAILSFL) is an intramembrane region (helical). Residues 126 to 178 (HIWAVVPCIRSYLIEIQCISRVYSICIHTFCDPLFEAIGKVFSNIRATVQKEI) lie on the Cytoplasmic side of the membrane. Residues 131–142 (VPCIRSYLIEIQ) are interacts with SPRY1, SPRY2, SPRY3 and SPRY4. Residues Cys-133, Cys-143, and Cys-156 are each lipidated (S-palmitoyl cysteine). Positions 149–160 (SICIHTFCDPLF) are interacts with SPRY1, SPRY2, and SPRY4. The tract at residues 167–178 (FSNIRATVQKEI) is interacts with SPRY1, SPRY2, SPRY3 and SPRY4.

Belongs to the caveolin family. As to quaternary structure, homooligomer. Interacts with GLIPR2. Interacts with NOSTRIN. Interacts with SNAP25 and STX1A. Interacts (via the N-terminus) with DPP4; the interaction is direct. Interacts with CTNNB1, CDH1 and JUP. Interacts with PACSIN2; this interaction induces membrane tubulation. Interacts with SLC7A9. Interacts with BMX and BTK. Interacts with TGFBR1. Interacts with CAVIN3 (via leucine-zipper domain) in a cholesterol-sensitive manner. Interacts with CAVIN1. Interacts with EHD2 in a cholesterol-dependent manner. Forms a ternary complex with UBXN6 and VCP; mediates CAV1 targeting to lysosomes for degradation. Interacts with ABCG1; this interaction regulates ABCG1-mediated cholesterol efflux. Interacts with NEU3; this interaction enhances NEU3 sialidase activity within caveola. Interacts (via C-terminus) with SPRY1, SPRY2 (via C-terminus), SPRY3, and SPRY4. Interacts with IGFBP5; this interaction allows trafficking of IGFBP5 from the plasma membrane to the nucleus. In terms of processing, phosphorylated at Tyr-14 by ABL1 in response to oxidative stress. Ubiquitinated. Undergo monoubiquitination and multi- and/or polyubiquitination. Monoubiquitination of N-terminal lysines promotes integration in a ternary complex with UBXN6 and VCP which promotes oligomeric CAV1 targeting to lysosomes for degradation. Ubiquitinated by ZNRF1; leading to degradation and modulation of the TLR4-mediated immune response.

The protein localises to the golgi apparatus membrane. It is found in the cell membrane. The protein resides in the membrane. It localises to the caveola. Its subcellular location is the membrane raft. Its function is as follows. May act as a scaffolding protein within caveolar membranes. Forms a stable heterooligomeric complex with CAV2 that targets to lipid rafts and drives caveolae formation. Mediates the recruitment of CAVIN proteins (CAVIN1/2/3/4) to the caveolae. Interacts directly with G-protein alpha subunits and can functionally regulate their activity. Involved in the costimulatory signal essential for T-cell receptor (TCR)-mediated T-cell activation. Its binding to DPP4 induces T-cell proliferation and NF-kappa-B activation in a T-cell receptor/CD3-dependent manner. Recruits CTNNB1 to caveolar membranes and may regulate CTNNB1-mediated signaling through the Wnt pathway. Negatively regulates TGFB1-mediated activation of SMAD2/3 by mediating the internalization of TGFBR1 from membrane rafts leading to its subsequent degradation. Binds 20(S)-hydroxycholesterol (20(S)-OHC). This Ornithorhynchus anatinus (Duckbill platypus) protein is Caveolin-1 (CAV1).